The primary structure comprises 203 residues: GTP cyclohydrolase 1 (203 aa).

The Zn(2+) site is built by Cys-87, His-90, and Cys-158.

This sequence belongs to the GTP cyclohydrolase I family. Homomer.

The enzyme catalyses GTP + H2O = 7,8-dihydroneopterin 3'-triphosphate + formate + H(+). The protein operates within cofactor biosynthesis; 7,8-dihydroneopterin triphosphate biosynthesis; 7,8-dihydroneopterin triphosphate from GTP: step 1/1. In Xylella fastidiosa (strain M23), this protein is GTP cyclohydrolase 1.